A 467-amino-acid chain; its full sequence is Cytochrome c-552 (467 aa).

Positions 1–27 (MMKKMTGKSFALSALVAASFMAAGAMA) are cleaved as a signal peptide. His87 is a binding site for heme c. The heme site is built by Cys115, Cys118, and Lys119. Residues Cys153, Cys156, His157, Cys195, Cys198, and His199 each contribute to the heme c site. Ca(2+) contacts are provided by Glu201, Tyr202, Lys250, and Gln252. Substrate is bound at residue Tyr202. His253 lines the substrate pocket. The heme c site is built by His264, Cys271, Cys274, His275, His290, Cys303, Cys306, His307, and His382.

This sequence belongs to the cytochrome c-552 family. Ca(2+) is required as a cofactor. The cofactor is heme c.

It is found in the periplasm. It carries out the reaction 6 Fe(III)-[cytochrome c] + NH4(+) + 2 H2O = 6 Fe(II)-[cytochrome c] + nitrite + 8 H(+). It participates in nitrogen metabolism; nitrate reduction (assimilation). Functionally, catalyzes the reduction of nitrite to ammonia, consuming six electrons in the process. This chain is Cytochrome c-552, found in Shewanella sp. (strain W3-18-1).